A 250-amino-acid chain; its full sequence is Ubiquinone/menaquinone biosynthesis C-methyltransferase UbiE (250 aa).

Residues S73, D94, and 122–123 each bind S-adenosyl-L-methionine; that span reads NA.

This sequence belongs to the class I-like SAM-binding methyltransferase superfamily. MenG/UbiE family.

The catalysed reaction is a 2-demethylmenaquinol + S-adenosyl-L-methionine = a menaquinol + S-adenosyl-L-homocysteine + H(+). The enzyme catalyses a 2-methoxy-6-(all-trans-polyprenyl)benzene-1,4-diol + S-adenosyl-L-methionine = a 5-methoxy-2-methyl-3-(all-trans-polyprenyl)benzene-1,4-diol + S-adenosyl-L-homocysteine + H(+). The protein operates within quinol/quinone metabolism; menaquinone biosynthesis; menaquinol from 1,4-dihydroxy-2-naphthoate: step 2/2. It participates in cofactor biosynthesis; ubiquinone biosynthesis. Methyltransferase required for the conversion of demethylmenaquinol (DMKH2) to menaquinol (MKH2) and the conversion of 2-polyprenyl-6-methoxy-1,4-benzoquinol (DDMQH2) to 2-polyprenyl-3-methyl-6-methoxy-1,4-benzoquinol (DMQH2). In Legionella pneumophila subsp. pneumophila (strain Philadelphia 1 / ATCC 33152 / DSM 7513), this protein is Ubiquinone/menaquinone biosynthesis C-methyltransferase UbiE.